The chain runs to 124 residues: MESCSVAQAGVLTSPFMWRWTGMAGALSALDNTIEDDADDQLPCGEGRPGWVRGELLGSQGVCKDSKDLFVPTSSSLYGCFCVGLVSGMAISVLLLASDFRKLDFSRPEPCFEKEASLWFVAQH.

Residues 77–97 traverse the membrane as a helical segment; the sequence is LYGCFCVGLVSGMAISVLLLA.

As to expression, expressed in gastrointestinal and immune tissue, as well as prostate, testis and ovary. Expressed in lamina propria and eosinophils but not in epithelial cells. Expression is greater in benign adjacent tissues than in colon tumors.

It localises to the membrane. The protein is Colorectal cancer-associated protein 1 (COLCA1) of Homo sapiens (Human).